The following is a 1401-amino-acid chain: DNA-directed RNA polymerase subunit beta' (1401 aa).

Residues cysteine 71, cysteine 73, cysteine 86, and cysteine 89 each contribute to the Zn(2+) site. Residues aspartate 462, aspartate 464, and aspartate 466 each contribute to the Mg(2+) site. 4 residues coordinate Zn(2+): cysteine 810, cysteine 884, cysteine 891, and cysteine 894. The segment at 1377–1401 (RRKGTGAESATPMLADMANDPAAAE) is disordered.

It belongs to the RNA polymerase beta' chain family. As to quaternary structure, the RNAP catalytic core consists of 2 alpha, 1 beta, 1 beta' and 1 omega subunit. When a sigma factor is associated with the core the holoenzyme is formed, which can initiate transcription. Mg(2+) serves as cofactor. Zn(2+) is required as a cofactor.

The catalysed reaction is RNA(n) + a ribonucleoside 5'-triphosphate = RNA(n+1) + diphosphate. DNA-dependent RNA polymerase catalyzes the transcription of DNA into RNA using the four ribonucleoside triphosphates as substrates. This is DNA-directed RNA polymerase subunit beta' from Rhizobium meliloti (strain 1021) (Ensifer meliloti).